The sequence spans 316 residues: Olfactory receptor 10H4 (316 aa).

Topologically, residues 1–26 are extracellular; it reads MPSQNYSIISEFNLFGFSAFPQHLLP. Asn5 is a glycosylation site (N-linked (GlcNAc...) asparagine). The chain crosses the membrane as a helical span at residues 27-47; sequence ILFLLYLLMFLFTLLGNLLIM. Over 48-55 the chain is Cytoplasmic; it reads ATIWIEHR. Residues 56-76 form a helical membrane-spanning segment; that stretch reads LHTPMYLFLCTLSVSEILFTV. Over 77–100 the chain is Extracellular; that stretch reads AITPRMLADLLSTHHSITFVACAN. Residues Cys98 and Cys190 are joined by a disulfide bond. Residues 101-121 form a helical membrane-spanning segment; it reads QMFFSFMFGFTHSFLLLVMGY. At 122 to 140 the chain is on the cytoplasmic side; it reads DRYVAICHPLRYNVLMSPR. Residues 141 to 161 traverse the membrane as a helical segment; it reads DCAHLVACTWAGGSVMGMMVT. The Extracellular segment spans residues 162-198; sequence TIVFHLTFCGSNVIHHFFCHVLSLLKLACENKTSSVI. The chain crosses the membrane as a helical span at residues 199-219; that stretch reads MGVMLVCVTALIGCLFLIILS. The Cytoplasmic segment spans residues 220 to 239; it reads YVFIVAAILRIPSAEGRHKT. Residues 240–260 traverse the membrane as a helical segment; the sequence is FSTCVSHLTVVVTHYSFASFI. Residues 261–273 are Extracellular-facing; it reads YLKPKGLHSMYSD. The helical transmembrane segment at 274–294 threads the bilayer; that stretch reads ALMATTYTVFTPFLSPIIFSL. Over 295 to 316 the chain is Cytoplasmic; the sequence is RNKELKNAINKNFYRKFCPPSS.

The protein belongs to the G-protein coupled receptor 1 family.

The protein localises to the cell membrane. Functionally, odorant receptor. The chain is Olfactory receptor 10H4 (OR10H4) from Homo sapiens (Human).